We begin with the raw amino-acid sequence, 251 residues long: Imidazole glycerol phosphate synthase subunit HisF (251 aa).

Catalysis depends on residues aspartate 13 and aspartate 132.

It belongs to the HisA/HisF family. In terms of assembly, heterodimer of HisH and HisF.

The protein resides in the cytoplasm. It catalyses the reaction 5-[(5-phospho-1-deoxy-D-ribulos-1-ylimino)methylamino]-1-(5-phospho-beta-D-ribosyl)imidazole-4-carboxamide + L-glutamine = D-erythro-1-(imidazol-4-yl)glycerol 3-phosphate + 5-amino-1-(5-phospho-beta-D-ribosyl)imidazole-4-carboxamide + L-glutamate + H(+). It functions in the pathway amino-acid biosynthesis; L-histidine biosynthesis; L-histidine from 5-phospho-alpha-D-ribose 1-diphosphate: step 5/9. In terms of biological role, IGPS catalyzes the conversion of PRFAR and glutamine to IGP, AICAR and glutamate. The HisF subunit catalyzes the cyclization activity that produces IGP and AICAR from PRFAR using the ammonia provided by the HisH subunit. The chain is Imidazole glycerol phosphate synthase subunit HisF from Campylobacter concisus (strain 13826).